The chain runs to 545 residues: Reticulon-2 (545 aa).

Disordered regions lie at residues 1-183 and 199-250; these read MGQV…ETGE and SPEV…EREP. The segment covering 14–25 has biased composition (low complexity); sequence APSTASSTPDST. Basic and acidic residues predominate over residues 32–43; it reads SDFRELHTAREF. Ser-44 is modified (phosphoserine). Residues 135 to 146 are compositionally biased toward basic and acidic residues; that stretch reads RPLEDLRLRLDH. Over residues 157-166 the composition is skewed to low complexity; it reads GEDSSTSSST. The span at 199–230 shows a compositional bias: polar residues; it reads SPEVLTPQLSPGSGTPQAGTPSPSRSRDSNSG. Phosphoserine occurs at positions 227 and 229. Residues 345–545 form the Reticulon domain; the sequence is VADLLYWKDT…AVSGSKAKAE (201 aa). The next 2 helical transmembrane spans lie at 368–388 and 463–483; these read LLCL…LLLL and LLFY…LLIL.

As to quaternary structure, interacts with isoform 1 but not isoform 3 of SPAST. Interacts with BACE1. Interacts (via first transmembrane domain) with ARL6IP5/GTRAP3-18. Interacts (via N-terminus) with SLC1A1/EAAC1; the interaction promotes cell surface expression of SLC1A1. In terms of assembly, interacts with TMEM33. As to expression, highly expressed in skeletal muscle.

It is found in the endoplasmic reticulum membrane. The protein localises to the sarcoplasmic reticulum membrane. The protein resides in the cell membrane. It localises to the sarcolemma. Its subcellular location is the T-tubule. It is found in the cytoplasm. The protein localises to the myofibril. The protein resides in the sarcomere. It localises to the z line. Its subcellular location is the cytoskeleton. In terms of biological role, inhibits amyloid precursor protein processing, probably by blocking BACE1 activity. Enhances trafficking of the glutamate transporter SLC1A1/EAAC1 from the endoplasmic reticulum to the cell surface. Plays a role in the translocation of SLC2A4/GLUT4 from intracellular membranes to the cell membrane which facilitates the uptake of glucose into the cell. This Homo sapiens (Human) protein is Reticulon-2 (RTN2).